A 509-amino-acid chain; its full sequence is Tyrosine-protein phosphatase non-receptor type substrate 1 (509 aa).

An N-terminal signal peptide occupies residues 1 to 31 (MEPAGPAPGRLGPLLFCLLLSASCFCAGASG). The Ig-like V-type domain occupies 32-138 (KELKVTQADK…IVEPDTEIKS (107 aa)). Residues 32 to 373 (KELKVTQADK…PDNNAYYNWN (342 aa)) are Extracellular-facing. Residues Asn-54, Asn-93, Asn-169, Asn-181, Asn-205, Asn-209, Asn-242, Asn-246, Asn-271, Asn-293, Asn-312, Asn-320, and Asn-345 are each glycosylated (N-linked (GlcNAc...) asparagine). An intrachain disulfide couples Cys-55 to Cys-122. Ig-like C1-type domains are found at residues 150–248 (PSSP…ANFS) and 255–349 (PTLK…HTVR). The cysteines at positions 172 and 229 are disulfide-linked. Cys-274 and Cys-332 form a disulfide bridge. Residues 374-394 (VFIGVGVACALLVVLLMAALY) form a helical membrane-spanning segment. The Cytoplasmic segment spans residues 395–509 (LLRIKQKKAK…EYASVQVQRK (115 aa)). Tyr-436 carries the post-translational modification Phosphotyrosine; by Tyr-kinases. The short motif at 436 to 439 (YADL) is the SH2-binding element. Residues 441 to 472 (LPKEKKPAPRVPEPNNHTEYASIETGKLPRPE) are disordered. The SH3-binding signature appears at 446 to 451 (KPAPRV). Phosphotyrosine; by Tyr-kinases is present on residues Tyr-460, Tyr-477, and Tyr-501. Short sequence motifs (SH2-binding) lie at residues 460 to 463 (YASI), 477 to 480 (YADL), and 501 to 504 (YASV). The tract at residues 485–509 (LNRAQPTPKPEPSFSEYASVQVQRK) is disordered. A compositionally biased stretch (polar residues) spans 500–509 (EYASVQVQRK).

In terms of assembly, binds PTPN11 when tyrosine-phosphorylated, except in macrophages, where it primarily binds PTPN6. Binds GRB2 in vitro. Binds FGR. Binds JAK2 irrespective of its phosphorylation status and forms a stable complex. Binds SCAP1 and/or SCAP2. The resulting complex recruits FYB1. Binds PTK2B. Interacts with TRIM2. Post-translationally, N-glycosylated. In terms of processing, phosphorylated on tyrosine residues in response to insulin, cell adhesion or epidermal growth factors. Dephosphorylated by PTPN11. As to expression, highly expressed in brain, spleen, lung, liver and kidney. Detected at lower levels in heart. Highly expressed in alveolar and peritoneal macrophages, and at lower levels in dendritic cells.

It is found in the membrane. In terms of biological role, immunoglobulin-like cell surface receptor for CD47. Acts as docking protein and induces translocation of PTPN6, PTPN11 and other binding partners from the cytosol to the plasma membrane. Supports adhesion of cerebellar neurons, neurite outgrowth and glial cell attachment. May play a key role in intracellular signaling during synaptogenesis and in synaptic function. Involved in the negative regulation of receptor tyrosine kinase-coupled cellular responses induced by cell adhesion, growth factors or insulin. Mediates negative regulation of phagocytosis, mast cell activation and dendritic cell activation. CD47 binding prevents maturation of immature dendritic cells and inhibits cytokine production by mature dendritic cells. Plays a role in antiviral immunity and limits new world arenavirus infection by decreasing virus internalization. Receptor for THBS1. Interaction with THBS1 stimulates phosphorylation of SIRPA. In response to THBS1, involved in ROS signaling in non-phagocytic cells, stimulating NADPH oxidase-derived ROS production. The protein is Tyrosine-protein phosphatase non-receptor type substrate 1 (Sirpa) of Rattus norvegicus (Rat).